A 114-amino-acid polypeptide reads, in one-letter code: Hydrogenase maturation factor HypA (114 aa).

A Ni(2+)-binding site is contributed by histidine 2. Zn(2+)-binding residues include cysteine 73, cysteine 76, cysteine 89, and cysteine 92.

The protein belongs to the HypA/HybF family.

Functionally, involved in the maturation of [NiFe] hydrogenases. Required for nickel insertion into the metal center of the hydrogenase. This chain is Hydrogenase maturation factor HypA, found in Caldanaerobacter subterraneus subsp. tengcongensis (strain DSM 15242 / JCM 11007 / NBRC 100824 / MB4) (Thermoanaerobacter tengcongensis).